The sequence spans 193 residues: Large ribosomal subunit protein eL18 (193 aa).

The disordered stretch occupies residues 158 to 193 (HFGAAGVPGSHAKPHVSSRGKERQRSSKRRHAFRHK). The span at 183–193 (SSKRRHAFRHK) shows a compositional bias: basic residues.

The protein belongs to the eukaryotic ribosomal protein eL18 family.

It localises to the cytoplasm. This is Large ribosomal subunit protein eL18 (RPL18-A) from Trypanosoma brucei brucei (strain 927/4 GUTat10.1).